The following is an 87-amino-acid chain: Small ribosomal subunit protein bS18 (87 aa).

A disordered region spans residues 1-21 (MRHKPTPPKGNKSLGNALASK).

It belongs to the bacterial ribosomal protein bS18 family. In terms of assembly, part of the 30S ribosomal subunit. Forms a tight heterodimer with protein bS6.

Binds as a heterodimer with protein bS6 to the central domain of the 16S rRNA, where it helps stabilize the platform of the 30S subunit. In Chlorobium phaeobacteroides (strain DSM 266 / SMG 266 / 2430), this protein is Small ribosomal subunit protein bS18.